A 618-amino-acid polypeptide reads, in one-letter code: Methionine--tRNA ligase (618 aa).

The 'HIGH' region signature appears at 12–22 (YYVNAEPHLGH). 4 residues coordinate Zn(2+): cysteine 127, cysteine 130, cysteine 144, and histidine 147. The short motif at 297-301 (KMSKT) is the 'KMSKS' region element. Lysine 300 is a binding site for ATP. The tRNA-binding domain maps to 518-618 (DFAKVELRVA…GEVPPGAVVK (101 aa)).

The protein belongs to the class-I aminoacyl-tRNA synthetase family. MetG type 2A subfamily. In terms of assembly, homodimer. It depends on Zn(2+) as a cofactor.

The protein resides in the cytoplasm. The enzyme catalyses tRNA(Met) + L-methionine + ATP = L-methionyl-tRNA(Met) + AMP + diphosphate. Is required not only for elongation of protein synthesis but also for the initiation of all mRNA translation through initiator tRNA(fMet) aminoacylation. The polypeptide is Methionine--tRNA ligase (metG) (Thermus thermophilus (strain ATCC 27634 / DSM 579 / HB8)).